The primary structure comprises 227 residues: LysM and putative peptidoglycan-binding domain-containing protein 1 (227 aa).

Positions 1–11 are enriched in pro residues; it reads MASPSRQPPPG. A disordered region spans residues 1–20; the sequence is MASPSRQPPPGGSGLLHGSR. A phosphoserine mark is found at serine 23 and serine 33. The 45-residue stretch at 40 to 84 folds into the LysM domain; that stretch reads LEHQLEPGDTLAGLALKYGVTMEQIKRANRLYTNDSIFLKKTLYI. Positions 95 to 150 are disordered; the sequence is NGLDSEEEKDGEEEVRPSNDEVWPHSTERKKQETGAGRANGEVFPTPGQETPTPIH. Acidic residues predominate over residues 98–107; that stretch reads DSEEEKDGEE. The residue at position 99 (serine 99) is a Phosphoserine. Over residues 108–127 the composition is skewed to basic and acidic residues; the sequence is EVRPSNDEVWPHSTERKKQE. Residues serine 166, serine 181, serine 194, and serine 212 each carry the phosphoserine modification. The segment at 172 to 196 is disordered; the sequence is AAQKLKKGESGVPGEDAGLHLSSPR.

This is LysM and putative peptidoglycan-binding domain-containing protein 1 (LYSMD1) from Macaca fascicularis (Crab-eating macaque).